Reading from the N-terminus, the 247-residue chain is 7-carboxy-7-deazaguanine synthase (247 aa).

Residues 15–17 (IQG) and arginine 30 contribute to the substrate site. Residues 21–247 (LVGRRQIFVR…PQMHRALGLR (227 aa)) enclose the Radical SAM core domain. Positions 34, 38, and 41 each coordinate [4Fe-4S] cluster. Threonine 43 is a Mg(2+) binding site. Threonine 78 lines the substrate pocket. Glycine 80 serves as a coordination point for S-adenosyl-L-methionine.

Belongs to the radical SAM superfamily. 7-carboxy-7-deazaguanine synthase family. Homodimer. Requires [4Fe-4S] cluster as cofactor. S-adenosyl-L-methionine serves as cofactor. The cofactor is Mg(2+).

The enzyme catalyses 6-carboxy-5,6,7,8-tetrahydropterin + H(+) = 7-carboxy-7-deazaguanine + NH4(+). It functions in the pathway purine metabolism; 7-cyano-7-deazaguanine biosynthesis. Functionally, catalyzes the complex heterocyclic radical-mediated conversion of 6-carboxy-5,6,7,8-tetrahydropterin (CPH4) to 7-carboxy-7-deazaguanine (CDG), a step common to the biosynthetic pathways of all 7-deazapurine-containing compounds. The protein is 7-carboxy-7-deazaguanine synthase of Methanothermobacter thermautotrophicus (strain ATCC 29096 / DSM 1053 / JCM 10044 / NBRC 100330 / Delta H) (Methanobacterium thermoautotrophicum).